The following is a 434-amino-acid chain: Tol-Pal system protein TolB (434 aa).

Residues 1–21 form the signal peptide; that stretch reads MIVRRALALAALALAASPALA. The interval 411-434 is disordered; sequence GDRQTPVTSGKTDLAAPAWGPLAP.

This sequence belongs to the TolB family. The Tol-Pal system is composed of five core proteins: the inner membrane proteins TolA, TolQ and TolR, the periplasmic protein TolB and the outer membrane protein Pal. They form a network linking the inner and outer membranes and the peptidoglycan layer.

The protein localises to the periplasm. In terms of biological role, part of the Tol-Pal system, which plays a role in outer membrane invagination during cell division and is important for maintaining outer membrane integrity. This chain is Tol-Pal system protein TolB, found in Anaeromyxobacter sp. (strain K).